A 99-amino-acid polypeptide reads, in one-letter code: Aspartyl/glutamyl-tRNA(Asn/Gln) amidotransferase subunit C (99 aa).

Belongs to the GatC family. In terms of assembly, heterotrimer of A, B and C subunits.

The enzyme catalyses L-glutamyl-tRNA(Gln) + L-glutamine + ATP + H2O = L-glutaminyl-tRNA(Gln) + L-glutamate + ADP + phosphate + H(+). It catalyses the reaction L-aspartyl-tRNA(Asn) + L-glutamine + ATP + H2O = L-asparaginyl-tRNA(Asn) + L-glutamate + ADP + phosphate + 2 H(+). Allows the formation of correctly charged Asn-tRNA(Asn) or Gln-tRNA(Gln) through the transamidation of misacylated Asp-tRNA(Asn) or Glu-tRNA(Gln) in organisms which lack either or both of asparaginyl-tRNA or glutaminyl-tRNA synthetases. The reaction takes place in the presence of glutamine and ATP through an activated phospho-Asp-tRNA(Asn) or phospho-Glu-tRNA(Gln). In Burkholderia ambifaria (strain MC40-6), this protein is Aspartyl/glutamyl-tRNA(Asn/Gln) amidotransferase subunit C.